The sequence spans 204 residues: Pre-mRNA leakage protein 1 (204 aa).

In terms of domain architecture, FHA spans 104–172 (YLVGRELGHS…NGTCLNNVVI (69 aa)).

Belongs to the pre-mRNA retention and splicing (RES) complex composed of at least BUD13, IST3 and PML1.

It is found in the cytoplasm. The protein localises to the nucleus. Its function is as follows. Required for efficient splicing and pre-mRNA nuclear retention. In Saccharomyces cerevisiae (strain ATCC 204508 / S288c) (Baker's yeast), this protein is Pre-mRNA leakage protein 1 (PML1).